The chain runs to 256 residues: Type III pantothenate kinase (256 aa).

An ATP-binding site is contributed by 6-13; that stretch reads DVGNTNMV. Substrate contacts are provided by residues Y100 and 107–110; that span reads GADR. Catalysis depends on D109, which acts as the Proton acceptor. Residue D129 coordinates K(+). T132 serves as a coordination point for ATP. Residue T184 participates in substrate binding.

Belongs to the type III pantothenate kinase family. Homodimer. NH4(+) is required as a cofactor. K(+) serves as cofactor.

Its subcellular location is the cytoplasm. The catalysed reaction is (R)-pantothenate + ATP = (R)-4'-phosphopantothenate + ADP + H(+). Its pathway is cofactor biosynthesis; coenzyme A biosynthesis; CoA from (R)-pantothenate: step 1/5. Its function is as follows. Catalyzes the phosphorylation of pantothenate (Pan), the first step in CoA biosynthesis. The polypeptide is Type III pantothenate kinase (Clostridioides difficile (strain 630) (Peptoclostridium difficile)).